The chain runs to 418 residues: UPF0261 protein BMEII0128 (418 aa).

It belongs to the UPF0261 family.

The chain is UPF0261 protein BMEII0128 from Brucella melitensis biotype 1 (strain ATCC 23456 / CCUG 17765 / NCTC 10094 / 16M).